The chain runs to 365 residues: tRNA/tmRNA (uracil-C(5))-methyltransferase (365 aa).

S-adenosyl-L-methionine is bound by residues Gln-189, Tyr-217, Asn-222, Glu-238, and Asp-298. The active-site Nucleophile is the Cys-323. Glu-357 functions as the Proton acceptor in the catalytic mechanism.

It belongs to the class I-like SAM-binding methyltransferase superfamily. RNA M5U methyltransferase family. TrmA subfamily.

It catalyses the reaction uridine(54) in tRNA + S-adenosyl-L-methionine = 5-methyluridine(54) in tRNA + S-adenosyl-L-homocysteine + H(+). The enzyme catalyses uridine(341) in tmRNA + S-adenosyl-L-methionine = 5-methyluridine(341) in tmRNA + S-adenosyl-L-homocysteine + H(+). Dual-specificity methyltransferase that catalyzes the formation of 5-methyluridine at position 54 (m5U54) in all tRNAs, and that of position 341 (m5U341) in tmRNA (transfer-mRNA). The sequence is that of tRNA/tmRNA (uracil-C(5))-methyltransferase from Shewanella loihica (strain ATCC BAA-1088 / PV-4).